A 188-amino-acid chain; its full sequence is Elongation factor P (188 aa).

It belongs to the elongation factor P family.

Its subcellular location is the cytoplasm. It participates in protein biosynthesis; polypeptide chain elongation. In terms of biological role, involved in peptide bond synthesis. Stimulates efficient translation and peptide-bond synthesis on native or reconstituted 70S ribosomes in vitro. Probably functions indirectly by altering the affinity of the ribosome for aminoacyl-tRNA, thus increasing their reactivity as acceptors for peptidyl transferase. This is Elongation factor P from Chlorobaculum tepidum (strain ATCC 49652 / DSM 12025 / NBRC 103806 / TLS) (Chlorobium tepidum).